Reading from the N-terminus, the 463-residue chain is Glutamate--tRNA ligase 1 (463 aa).

A 'HIGH' region motif is present at residues 10 to 20 (PSPTGFLHIGS). The 'KMSKS' region signature appears at 239–243 (KLSKR). Residue K242 participates in ATP binding.

Belongs to the class-I aminoacyl-tRNA synthetase family. Glutamate--tRNA ligase type 1 subfamily. In terms of assembly, monomer.

Its subcellular location is the cytoplasm. The enzyme catalyses tRNA(Glu) + L-glutamate + ATP = L-glutamyl-tRNA(Glu) + AMP + diphosphate. Catalyzes the attachment of glutamate to tRNA(Glu) in a two-step reaction: glutamate is first activated by ATP to form Glu-AMP and then transferred to the acceptor end of tRNA(Glu). The polypeptide is Glutamate--tRNA ligase 1 (Rickettsia canadensis (strain McKiel)).